A 398-amino-acid chain; its full sequence is Succinyl-diaminopimelate desuccinylase (398 aa).

His68 lines the Zn(2+) pocket. Residue Asp70 is part of the active site. Asp101 provides a ligand contact to Zn(2+). The Proton acceptor role is filled by Glu135. Zn(2+)-binding residues include Glu136, Glu164, and His349.

The protein belongs to the peptidase M20A family. DapE subfamily. As to quaternary structure, homodimer. Zn(2+) serves as cofactor. The cofactor is Co(2+).

The enzyme catalyses N-succinyl-(2S,6S)-2,6-diaminopimelate + H2O = (2S,6S)-2,6-diaminopimelate + succinate. It participates in amino-acid biosynthesis; L-lysine biosynthesis via DAP pathway; LL-2,6-diaminopimelate from (S)-tetrahydrodipicolinate (succinylase route): step 3/3. Its function is as follows. Catalyzes the hydrolysis of N-succinyl-L,L-diaminopimelic acid (SDAP), forming succinate and LL-2,6-diaminopimelate (DAP), an intermediate involved in the bacterial biosynthesis of lysine and meso-diaminopimelic acid, an essential component of bacterial cell walls. In Wolbachia pipientis subsp. Culex pipiens (strain wPip), this protein is Succinyl-diaminopimelate desuccinylase.